The following is a 370-amino-acid chain: Aminomethyltransferase (370 aa).

This sequence belongs to the GcvT family. In terms of assembly, the glycine cleavage system is composed of four proteins: P, T, L and H.

The catalysed reaction is N(6)-[(R)-S(8)-aminomethyldihydrolipoyl]-L-lysyl-[protein] + (6S)-5,6,7,8-tetrahydrofolate = N(6)-[(R)-dihydrolipoyl]-L-lysyl-[protein] + (6R)-5,10-methylene-5,6,7,8-tetrahydrofolate + NH4(+). Functionally, the glycine cleavage system catalyzes the degradation of glycine. The protein is Aminomethyltransferase of Clostridium botulinum (strain Langeland / NCTC 10281 / Type F).